The primary structure comprises 126 residues: UPF0212 protein TON_0350 (126 aa).

Belongs to the UPF0212 family.

In Thermococcus onnurineus (strain NA1), this protein is UPF0212 protein TON_0350.